The primary structure comprises 567 residues: MTGDGSAHISKNNQNQHKDRFKFIVNDKSILGPQWLSLYQTDGKVTFAKSHFEQAMMNVIREPNINSTVILRADILKEINHAAEAGSEPKFDESVLKKFEIDNGNESGEEDVKKINIEDLNIRSCETSESLKLSPVHEFVRRIIPRNFYKDAIINQTCLILNSKDPNFQETSLIVYTPHINSEKDCPFYIPRTQSVGILLHQSVLSVHYIPFPEDKTAFTDESERVVRTAYRLLQTANKHSKGVMQGYEKRVNHDQVVNKVNFQNTYIVLKKKYSKFLVENWAESTDPKKHVFEDIAIAAFLIELWIKVYGPDFRSKMQFRDLGCGNGALCYILLSESIKGLGIDARKRKSWSIYPPEVQSSLKEQVIIPSILLRPHPALKRQVPHLEHNGRFFPVKVTHEVIAPATVVYSSEDLLKSPQVNTAEFPPDTFIIGNHSDELTCWIPLLGHPYMVIPCCSHNFSGQRVRFNVRKRSPRSNEIKNQNNSKSTYSGLVDHVEYISSRVGWKVEKEMLRIPSTRNAAIIGVENATLKHFPTQAVYDMIWEDGGAEGWIQNTMSLLKRNPRNH.

S107 carries the post-translational modification Phosphoserine.

The protein belongs to the TRM44 family.

It localises to the cytoplasm. The catalysed reaction is uridine(44) in tRNA(Ser) + S-adenosyl-L-methionine = 2'-O-methyluridine(44) in tRNA(Ser) + S-adenosyl-L-homocysteine + H(+). Functionally, tRNA (uracil-O(2)-)-methyltransferase, which catalyzes the formation of O(2)-methyluracil at position 44 (Um44) in tRNA(Ser). In Saccharomyces cerevisiae (strain ATCC 204508 / S288c) (Baker's yeast), this protein is tRNA (uracil-O(2)-)-methyltransferase (TRM44).